Reading from the N-terminus, the 457-residue chain is Adenylosuccinate synthetase isozyme 1 (457 aa).

Residues 1-25 (MSGTRASNDRPPSAGGVKRGRLQHE) form a disordered region. GTP contacts are provided by residues 42–48 (GDEGKGK) and 70–72 (GHT). Asp43 (proton acceptor) is an active-site residue. Mg(2+) is bound by residues Asp43 and Gly70. Asp43 provides a ligand contact to substrate. IMP-binding positions include 43–46 (DEGK), 68–71 (NAGH), Thr163, Arg177, Asn256, Thr271, and Arg335. His71 acts as the Proton donor in catalysis. 331–337 (VTTGRKR) is a binding site for substrate. Residues Arg337, 363 to 365 (KLD), and 445 to 448 (GVGK) contribute to the GTP site.

This sequence belongs to the adenylosuccinate synthetase family. In terms of assembly, homodimer. Mg(2+) serves as cofactor.

It is found in the cytoplasm. The enzyme catalyses IMP + L-aspartate + GTP = N(6)-(1,2-dicarboxyethyl)-AMP + GDP + phosphate + 2 H(+). Its pathway is purine metabolism; AMP biosynthesis via de novo pathway; AMP from IMP: step 1/2. Its function is as follows. Component of the purine nucleotide cycle (PNC), which interconverts IMP and AMP to regulate the nucleotide levels in various tissues, and which contributes to glycolysis and ammoniagenesis. Catalyzes the first committed step in the biosynthesis of AMP from IMP. The polypeptide is Adenylosuccinate synthetase isozyme 1 (Bos taurus (Bovine)).